Reading from the N-terminus, the 92-residue chain is Small ribosomal subunit protein uS19 (92 aa).

It belongs to the universal ribosomal protein uS19 family.

Protein S19 forms a complex with S13 that binds strongly to the 16S ribosomal RNA. This chain is Small ribosomal subunit protein uS19, found in Prochlorococcus marinus (strain MIT 9215).